Consider the following 48-residue polypeptide: Small, acid-soluble spore protein P (48 aa).

Residues 1–12 (MTNKNDSKDMRK) are compositionally biased toward basic and acidic residues. The disordered stretch occupies residues 1-48 (MTNKNDSKDMRKNVSKGDNPGQPEPLDGSKKVKNRNHTRQKHNTSHDM). The span at 31-48 (KVKNRNHTRQKHNTSHDM) shows a compositional bias: basic residues.

This sequence belongs to the SspP family.

The protein localises to the spore core. The protein is Small, acid-soluble spore protein P of Geobacillus thermodenitrificans (strain NG80-2).